A 313-amino-acid polypeptide reads, in one-letter code: Ribosomal RNA small subunit methyltransferase H (313 aa).

S-adenosyl-L-methionine contacts are provided by residues 35-37 (GGH), D55, F79, D101, and Q108.

It belongs to the methyltransferase superfamily. RsmH family.

The protein localises to the cytoplasm. It catalyses the reaction cytidine(1402) in 16S rRNA + S-adenosyl-L-methionine = N(4)-methylcytidine(1402) in 16S rRNA + S-adenosyl-L-homocysteine + H(+). Functionally, specifically methylates the N4 position of cytidine in position 1402 (C1402) of 16S rRNA. The chain is Ribosomal RNA small subunit methyltransferase H from Erwinia tasmaniensis (strain DSM 17950 / CFBP 7177 / CIP 109463 / NCPPB 4357 / Et1/99).